A 91-amino-acid polypeptide reads, in one-letter code: Sec-independent protein translocase protein TatA (91 aa).

The helical transmembrane segment at 1-21 (MGAMQPMHWLIVAVVVVILFG) threads the bilayer.

This sequence belongs to the TatA/E family. The Tat system comprises two distinct complexes: a TatABC complex, containing multiple copies of TatA, TatB and TatC subunits, and a separate TatA complex, containing only TatA subunits. Substrates initially bind to the TatABC complex, which probably triggers association of the separate TatA complex to form the active translocon.

It is found in the cell membrane. In terms of biological role, part of the twin-arginine translocation (Tat) system that transports large folded proteins containing a characteristic twin-arginine motif in their signal peptide across membranes. TatA could form the protein-conducting channel of the Tat system. The protein is Sec-independent protein translocase protein TatA of Rhodococcus erythropolis (strain PR4 / NBRC 100887).